The primary structure comprises 313 residues: D-alanine--D-alanine ligase (313 aa).

The ATP-grasp domain occupies 111 to 306 (KQVWHSLGLP…FQQLVLAILA (196 aa)). 137 to 192 (AAELGFPLIVKPAHEGSSIGMAKVESVEALIAAWQDAARYDSQVLVEQWIAGPEYT) is an ATP binding site. Mg(2+)-binding residues include Asp-260, Glu-273, and Asn-275.

This sequence belongs to the D-alanine--D-alanine ligase family. The cofactor is Mg(2+). Requires Mn(2+) as cofactor.

It is found in the cytoplasm. The catalysed reaction is 2 D-alanine + ATP = D-alanyl-D-alanine + ADP + phosphate + H(+). It functions in the pathway cell wall biogenesis; peptidoglycan biosynthesis. Functionally, cell wall formation. The polypeptide is D-alanine--D-alanine ligase (Ectopseudomonas mendocina (strain ymp) (Pseudomonas mendocina)).